A 214-amino-acid polypeptide reads, in one-letter code: Putative ankyrin repeat protein R844 (214 aa).

ANK repeat units follow at residues 41 to 70 (VEKNMIEHIVENGYLDVLKYIDSLKNQNKF), 81 to 110 (SLDKYLIMSCEFGHLEMTKYFVSQGANVKT), 111 to 140 (DNNMPLRLASQNGHIDTIKYLIENSVDVRA), 142 to 170 (NDCALRMASLFGHINVVKYLVDMGADVTS), and 172 to 200 (NNFAIIHTARSGRLELAKYLAEKGADIRA).

This is Putative ankyrin repeat protein R844 from Acanthamoeba polyphaga mimivirus (APMV).